Here is a 61-residue protein sequence, read N- to C-terminus: Small ribosomal subunit protein uS14 (61 aa).

C24, C27, C40, and C43 together coordinate Zn(2+).

Belongs to the universal ribosomal protein uS14 family. Zinc-binding uS14 subfamily. Part of the 30S ribosomal subunit. Contacts proteins S3 and S10. The cofactor is Zn(2+).

In terms of biological role, binds 16S rRNA, required for the assembly of 30S particles and may also be responsible for determining the conformation of the 16S rRNA at the A site. The protein is Small ribosomal subunit protein uS14 of Acetivibrio thermocellus (strain ATCC 27405 / DSM 1237 / JCM 9322 / NBRC 103400 / NCIMB 10682 / NRRL B-4536 / VPI 7372) (Clostridium thermocellum).